The primary structure comprises 146 residues: 3-hydroxyacyl-[acyl-carrier-protein] dehydratase FabZ (146 aa).

H49 is a catalytic residue.

This sequence belongs to the thioester dehydratase family. FabZ subfamily.

The protein localises to the cytoplasm. The enzyme catalyses a (3R)-hydroxyacyl-[ACP] = a (2E)-enoyl-[ACP] + H2O. Involved in unsaturated fatty acids biosynthesis. Catalyzes the dehydration of short chain beta-hydroxyacyl-ACPs and long chain saturated and unsaturated beta-hydroxyacyl-ACPs. This is 3-hydroxyacyl-[acyl-carrier-protein] dehydratase FabZ from Pseudomonas putida (strain ATCC 700007 / DSM 6899 / JCM 31910 / BCRC 17059 / LMG 24140 / F1).